We begin with the raw amino-acid sequence, 892 residues long: Bifunctional uridylyltransferase/uridylyl-removing enzyme (892 aa).

The tract at residues 1–348 (MPNFTGNTRP…LVDAKVHVRP (348 aa)) is uridylyltransferase. Residues 349–710 (INERFQARNG…RIHNQEPGTM (362 aa)) form a uridylyl-removing region. In terms of domain architecture, HD spans 467 to 589 (VDEHTLFLIH…VGDERRLNHL (123 aa)). ACT domains follow at residues 711-786 (EVFI…LTQP) and 822-892 (VMEL…YLER).

Belongs to the GlnD family. The cofactor is Mg(2+).

It catalyses the reaction [protein-PII]-L-tyrosine + UTP = [protein-PII]-uridylyl-L-tyrosine + diphosphate. The catalysed reaction is [protein-PII]-uridylyl-L-tyrosine + H2O = [protein-PII]-L-tyrosine + UMP + H(+). Uridylyltransferase (UTase) activity is inhibited by glutamine, while glutamine activates uridylyl-removing (UR) activity. In terms of biological role, modifies, by uridylylation and deuridylylation, the PII regulatory proteins (GlnB and homologs), in response to the nitrogen status of the cell that GlnD senses through the glutamine level. Under low glutamine levels, catalyzes the conversion of the PII proteins and UTP to PII-UMP and PPi, while under higher glutamine levels, GlnD hydrolyzes PII-UMP to PII and UMP (deuridylylation). Thus, controls uridylylation state and activity of the PII proteins, and plays an important role in the regulation of nitrogen assimilation and metabolism. This is Bifunctional uridylyltransferase/uridylyl-removing enzyme from Nitrosococcus oceani (strain ATCC 19707 / BCRC 17464 / JCM 30415 / NCIMB 11848 / C-107).